The sequence spans 116 residues: Type IV narrow pilus major component PilA5 (116 aa).

A propeptide spans 1–5 (MRAKG) (leader sequence). At phenylalanine 6 the chain carries N-methylphenylalanine. The chain crosses the membrane as a helical span at residues 6-26 (FTLIELAIVIVIIGILVAIAV).

Post-translationally, glycosylated.

The protein localises to the cell inner membrane. It is found in the cell outer membrane. The protein resides in the periplasm. In terms of biological role, plays an essential role in forming the main structure of the narrow T4P pili that participates in twitching motility. This chain is Type IV narrow pilus major component PilA5 (pilA5), found in Thermus thermophilus (strain ATCC BAA-163 / DSM 7039 / HB27).